The following is a 1377-amino-acid chain: DNA-directed RNA polymerase subunit beta (1377 aa).

The protein belongs to the RNA polymerase beta chain family. In terms of assembly, the RNAP catalytic core consists of 2 alpha, 1 beta, 1 beta' and 1 omega subunit. When a sigma factor is associated with the core the holoenzyme is formed, which can initiate transcription.

It carries out the reaction RNA(n) + a ribonucleoside 5'-triphosphate = RNA(n+1) + diphosphate. Functionally, DNA-dependent RNA polymerase catalyzes the transcription of DNA into RNA using the four ribonucleoside triphosphates as substrates. The protein is DNA-directed RNA polymerase subunit beta of Orientia tsutsugamushi (strain Boryong) (Rickettsia tsutsugamushi).